Consider the following 199-residue polypeptide: Large ribosomal subunit protein eL13A (199 aa).

Phosphothreonine is present on residues Thr-144 and Thr-152.

It belongs to the eukaryotic ribosomal protein eL13 family. As to quaternary structure, component of the large ribosomal subunit (LSU). Mature yeast ribosomes consist of a small (40S) and a large (60S) subunit. The 40S small subunit contains 1 molecule of ribosomal RNA (18S rRNA) and 33 different proteins (encoded by 57 genes). The large 60S subunit contains 3 rRNA molecules (25S, 5.8S and 5S rRNA) and 46 different proteins (encoded by 81 genes).

It is found in the cytoplasm. In terms of biological role, component of the ribosome, a large ribonucleoprotein complex responsible for the synthesis of proteins in the cell. The small ribosomal subunit (SSU) binds messenger RNAs (mRNAs) and translates the encoded message by selecting cognate aminoacyl-transfer RNA (tRNA) molecules. The large subunit (LSU) contains the ribosomal catalytic site termed the peptidyl transferase center (PTC), which catalyzes the formation of peptide bonds, thereby polymerizing the amino acids delivered by tRNAs into a polypeptide chain. The nascent polypeptides leave the ribosome through a tunnel in the LSU and interact with protein factors that function in enzymatic processing, targeting, and the membrane insertion of nascent chains at the exit of the ribosomal tunnel. This chain is Large ribosomal subunit protein eL13A, found in Saccharomyces cerevisiae (strain ATCC 204508 / S288c) (Baker's yeast).